The primary structure comprises 369 residues: Methionine import ATP-binding protein MetN 1 (369 aa).

The 237-residue stretch at 29-265 folds into the ABC transporter domain; it reads IRLHGLGKRY…PRHAVTRSLL (237 aa). 62–69 provides a ligand contact to ATP; the sequence is GRSGAGKS.

Belongs to the ABC transporter superfamily. Methionine importer (TC 3.A.1.24) family. In terms of assembly, the complex is composed of two ATP-binding proteins (MetN), two transmembrane proteins (MetI) and a solute-binding protein (MetQ).

The protein resides in the cell inner membrane. The enzyme catalyses L-methionine(out) + ATP + H2O = L-methionine(in) + ADP + phosphate + H(+). The catalysed reaction is D-methionine(out) + ATP + H2O = D-methionine(in) + ADP + phosphate + H(+). Part of the ABC transporter complex MetNIQ involved in methionine import. Responsible for energy coupling to the transport system. This Pseudomonas aeruginosa (strain ATCC 15692 / DSM 22644 / CIP 104116 / JCM 14847 / LMG 12228 / 1C / PRS 101 / PAO1) protein is Methionine import ATP-binding protein MetN 1.